The sequence spans 99 residues: Integration host factor subunit alpha (99 aa).

The protein belongs to the bacterial histone-like protein family. Heterodimer of an alpha and a beta chain.

Its function is as follows. This protein is one of the two subunits of integration host factor, a specific DNA-binding protein that functions in genetic recombination as well as in transcriptional and translational control. This chain is Integration host factor subunit alpha, found in Anaeromyxobacter sp. (strain Fw109-5).